Consider the following 174-residue polypeptide: Chorion class CB protein M5H4 (174 aa).

Residues methionine 1–serine 20 form the signal peptide. The segment at glutamine 21–alanine 71 is left arm. Residues serine 72 to glutamate 142 are central domain. Positions alanine 143–tyrosine 174 are right arm.

This sequence belongs to the chorion protein family.

Functionally, this protein is one of many from the eggshell of the silk moth. This is Chorion class CB protein M5H4 from Bombyx mori (Silk moth).